A 1275-amino-acid chain; its full sequence is Serine/threonine-protein kinase ULK4 (1275 aa).

Positions 4–280 (FILYEEIGRG…WTRLLQHSFW (277 aa)) constitute a Protein kinase domain. 2 disordered regions span residues 299 to 350 (SRNT…KSTL) and 364 to 392 (RPTP…TSPL). Over residues 336-348 (FRLENPTEFRPKS) the composition is skewed to basic and acidic residues. A compositionally biased stretch (polar residues) spans 364–373 (RPTPRTSTAV). 5 HEAT repeats span residues 842–880 (LKLC…ILSH), 926–964 (STVV…LLVN), 1025–1063 (LVEE…NLVA), 1151–1189 (NRPL…LYGG), and 1213–1253 (PKEQ…LAPG).

The protein belongs to the protein kinase superfamily. Ser/Thr protein kinase family. APG1/unc-51/ULK1 subfamily. Expressed in the brain, mainly in postmitotic neurons, including GABAergic neurons, but not in astrocytes (at protein level).

It carries out the reaction L-seryl-[protein] + ATP = O-phospho-L-seryl-[protein] + ADP + H(+). The enzyme catalyses L-threonyl-[protein] + ATP = O-phospho-L-threonyl-[protein] + ADP + H(+). In terms of biological role, may be involved in the remodeling of cytoskeletal components, such as alpha-tubulin, and in this way regulates neurite branching and elongation, as well as cell motility. The chain is Serine/threonine-protein kinase ULK4 (ULK4) from Homo sapiens (Human).